The sequence spans 470 residues: Uronate isomerase (470 aa).

It belongs to the metallo-dependent hydrolases superfamily. Uronate isomerase family.

It carries out the reaction D-glucuronate = D-fructuronate. It catalyses the reaction aldehydo-D-galacturonate = keto-D-tagaturonate. The protein operates within carbohydrate metabolism; pentose and glucuronate interconversion. The chain is Uronate isomerase from Vibrio parahaemolyticus serotype O3:K6 (strain RIMD 2210633).